The primary structure comprises 497 residues: Signal recognition particle subunit SRP54 2 (497 aa).

Residues 1–295 (MVLAQLGGSI…DVKPFVSRLL (295 aa)) form a G-domain region. GTP-binding positions include 108 to 115 (GLQGSGKT), 190 to 194 (DTSGR), and 248 to 251 (TKLD). The M-domain stretch occupies residues 296-497 (GMGDLSGLMD…MLGGMGLGGD (202 aa)).

The protein belongs to the GTP-binding SRP family. SRP54 subfamily. In terms of assembly, component of a signal recognition particle (SRP) complex that consists of a 7SL RNA molecule of 300 nucleotides and six protein subunits: SRP72, SRP68, SRP54, SRP19, SRP14 and SRP9.

It is found in the cytoplasm. It localises to the endoplasmic reticulum. The enzyme catalyses GTP + H2O = GDP + phosphate + H(+). Its function is as follows. Component of the signal recognition particle (SRP) complex, a ribonucleoprotein complex that mediates the cotranslational targeting of secretory and membrane proteins to the endoplasmic reticulum (ER). As part of the SRP complex, associates with the SRP receptor (SR) component SRPRA to target secretory proteins to the endoplasmic reticulum membrane. Binds to the signal sequence of presecretory proteins when they emerge from the ribosomes. Displays basal GTPase activity, and stimulates reciprocal GTPase activation of the SR subunit SRPRA. Forms a guanosine 5'-triphosphate (GTP)-dependent complex with the SR subunit SRPRA. SR compaction and GTPase mediated rearrangement of SR drive SRP-mediated cotranslational protein translocation into the ER. Requires the presence of SRP9/SRP14 and/or SRP19 to stably interact with RNA. This is Signal recognition particle subunit SRP54 2 (SRP54-2) from Hordeum vulgare (Barley).